A 1412-amino-acid chain; its full sequence is DNA-directed RNA polymerase subunit beta' (1412 aa).

4 residues coordinate Zn(2+): Cys-70, Cys-72, Cys-85, and Cys-88. The Mg(2+) site is built by Asp-460, Asp-462, and Asp-464. Zn(2+) is bound by residues Cys-819, Cys-893, Cys-900, and Cys-903. The tract at residues 1392–1412 (EEAFEFGTPSTPAEEPQHPAE) is disordered.

This sequence belongs to the RNA polymerase beta' chain family. As to quaternary structure, the RNAP catalytic core consists of 2 alpha, 1 beta, 1 beta' and 1 omega subunit. When a sigma factor is associated with the core the holoenzyme is formed, which can initiate transcription. Mg(2+) is required as a cofactor. The cofactor is Zn(2+).

The enzyme catalyses RNA(n) + a ribonucleoside 5'-triphosphate = RNA(n+1) + diphosphate. DNA-dependent RNA polymerase catalyzes the transcription of DNA into RNA using the four ribonucleoside triphosphates as substrates. This chain is DNA-directed RNA polymerase subunit beta', found in Burkholderia thailandensis (strain ATCC 700388 / DSM 13276 / CCUG 48851 / CIP 106301 / E264).